The sequence spans 268 residues: Aliphatic sulfonates import ATP-binding protein SsuB 2 (268 aa).

Residues 16–230 (VQLRNVVRQF…DSGQAGFQSI (215 aa)) form the ABC transporter domain. Position 48–55 (48–55 (GASGSGKT)) interacts with ATP.

Belongs to the ABC transporter superfamily. Aliphatic sulfonates importer (TC 3.A.1.17.2) family. The complex is composed of two ATP-binding proteins (SsuB), two transmembrane proteins (SsuC) and a solute-binding protein (SsuA).

Its subcellular location is the cell inner membrane. It catalyses the reaction ATP + H2O + aliphatic sulfonate-[sulfonate-binding protein]Side 1 = ADP + phosphate + aliphatic sulfonateSide 2 + [sulfonate-binding protein]Side 1.. Functionally, part of the ABC transporter complex SsuABC involved in aliphatic sulfonates import. Responsible for energy coupling to the transport system. This Pseudomonas savastanoi pv. phaseolicola (strain 1448A / Race 6) (Pseudomonas syringae pv. phaseolicola (strain 1448A / Race 6)) protein is Aliphatic sulfonates import ATP-binding protein SsuB 2.